The primary structure comprises 163 residues: NADH-quinone oxidoreductase subunit I (163 aa).

4Fe-4S ferredoxin-type domains are found at residues 53–83 and 94–123; these read LRRYPNGEERCIACKLCEAICPAQAITIEAG and VRYDIDMVKCIYCGFCQEACPVDAIVEGPN. Cys63, Cys66, Cys69, Cys73, Cys103, Cys106, Cys109, and Cys113 together coordinate [4Fe-4S] cluster.

It belongs to the complex I 23 kDa subunit family. As to quaternary structure, NDH-1 is composed of 14 different subunits. Subunits NuoA, H, J, K, L, M, N constitute the membrane sector of the complex. It depends on [4Fe-4S] cluster as a cofactor.

It is found in the cell inner membrane. It catalyses the reaction a quinone + NADH + 5 H(+)(in) = a quinol + NAD(+) + 4 H(+)(out). Its function is as follows. NDH-1 shuttles electrons from NADH, via FMN and iron-sulfur (Fe-S) centers, to quinones in the respiratory chain. The immediate electron acceptor for the enzyme in this species is believed to be ubiquinone. Couples the redox reaction to proton translocation (for every two electrons transferred, four hydrogen ions are translocated across the cytoplasmic membrane), and thus conserves the redox energy in a proton gradient. The sequence is that of NADH-quinone oxidoreductase subunit I from Rhizobium johnstonii (strain DSM 114642 / LMG 32736 / 3841) (Rhizobium leguminosarum bv. viciae).